A 92-amino-acid polypeptide reads, in one-letter code: Endoribonuclease VapD homolog (92 aa).

It belongs to the VapD ribonuclease family. In terms of assembly, homodimer.

In terms of biological role, cleaves ssRNA, mostly between U:A. This Neisseria gonorrhoeae protein is Endoribonuclease VapD homolog.